A 67-amino-acid polypeptide reads, in one-letter code: Beta-defensin 36 (67 aa).

The first 22 residues, 1–22 (MKLLLLTLAALLLVSQLTPGDA), serve as a signal peptide directing secretion. 3 disulfides stabilise this stretch: C25-C52, C32-C46, and C36-C53.

This sequence belongs to the beta-defensin family.

It is found in the secreted. In terms of biological role, has antibacterial activity. The polypeptide is Beta-defensin 36 (Defb36) (Mus musculus (Mouse)).